We begin with the raw amino-acid sequence, 48 residues long: Delta-stichotoxin-She1a (48 aa).

3 disulfides stabilise this stretch: C3–C43, C5–C33, and C26–C44.

It belongs to the sea anemone sodium channel inhibitory toxin family. Type II subfamily.

It localises to the secreted. The protein localises to the nematocyst. Functionally, binds specifically to voltage-gated sodium channels (Nav), thereby delaying their inactivation during signal transduction. Is highly toxic to crabs (by intrahemocoelic injection), but without effect upon mice (by intraperitoneal injection). This chain is Delta-stichotoxin-She1a, found in Stichodactyla helianthus (Sun anemone).